The following is a 67-amino-acid chain: Large ribosomal subunit protein uL29c (67 aa).

The protein belongs to the universal ribosomal protein uL29 family.

Its subcellular location is the plastid. It localises to the chloroplast. The sequence is that of Large ribosomal subunit protein uL29c (rpl29) from Porphyra purpurea (Red seaweed).